Consider the following 97-residue polypeptide: Protein S100-A10 (97 aa).

2 positions are modified to N6-acetyllysine: Lys23 and Lys28. N6-acetyllysine; alternate is present on Lys37. A Glycyl lysine isopeptide (Lys-Gly) (interchain with G-Cter in SUMO2); alternate cross-link involves residue Lys37. Residues Lys54 and Lys57 each carry the N6-acetyllysine modification. The ancestral calcium site stretch occupies residues 60–71; the sequence is DQCRDGKVGFQS.

The protein belongs to the S-100 family. Heterotetramer containing 2 light chains of S100A10/p11 and 2 heavy chains of ANXA2/p36. Interacts with SCN10A. Interacts with TASOR.

Its function is as follows. Because S100A10 induces the dimerization of ANXA2/p36, it may function as a regulator of protein phosphorylation in that the ANXA2 monomer is the preferred target (in vitro) of tyrosine-specific kinase. The protein is Protein S100-A10 (S100A10) of Bos taurus (Bovine).